Here is a 364-residue protein sequence, read N- to C-terminus: Spermidine/putrescine import ATP-binding protein PotA (364 aa).

Positions 6–236 constitute an ABC transporter domain; the sequence is IEIRQIYKSY…PANLHVAMFI (231 aa). 38–45 is a binding site for ATP; the sequence is GPSGCGKT.

The protein belongs to the ABC transporter superfamily. Spermidine/putrescine importer (TC 3.A.1.11.1) family. As to quaternary structure, the complex is composed of two ATP-binding proteins (PotA), two transmembrane proteins (PotB and PotC) and a solute-binding protein (PotD).

The protein resides in the cell inner membrane. It catalyses the reaction ATP + H2O + polyamine-[polyamine-binding protein]Side 1 = ADP + phosphate + polyamineSide 2 + [polyamine-binding protein]Side 1.. Functionally, part of the ABC transporter complex PotABCD involved in spermidine/putrescine import. Responsible for energy coupling to the transport system. The polypeptide is Spermidine/putrescine import ATP-binding protein PotA (Legionella pneumophila (strain Lens)).